Consider the following 273-residue polypeptide: Proteasome subunit beta (273 aa).

A propeptide spans 1 to 50 (removed in mature form; by autocatalysis); it reads MRKDGARLALPLFDPRHDPGPDFAALVSRDAARTVPTSGDGSLGAQVPHG. The active-site Nucleophile is threonine 51.

The protein belongs to the peptidase T1B family. As to quaternary structure, the 20S proteasome core is composed of 14 alpha and 14 beta subunits that assemble into four stacked heptameric rings, resulting in a barrel-shaped structure. The two inner rings, each composed of seven catalytic beta subunits, are sandwiched by two outer rings, each composed of seven alpha subunits. The catalytic chamber with the active sites is on the inside of the barrel. Has a gated structure, the ends of the cylinder being occluded by the N-termini of the alpha-subunits. Is capped by the proteasome-associated ATPase, ARC.

The protein localises to the cytoplasm. It catalyses the reaction Cleavage of peptide bonds with very broad specificity.. The protein operates within protein degradation; proteasomal Pup-dependent pathway. With respect to regulation, the formation of the proteasomal ATPase ARC-20S proteasome complex, likely via the docking of the C-termini of ARC into the intersubunit pockets in the alpha-rings, may trigger opening of the gate for substrate entry. Interconversion between the open-gate and close-gate conformations leads to a dynamic regulation of the 20S proteasome proteolysis activity. In terms of biological role, component of the proteasome core, a large protease complex with broad specificity involved in protein degradation. The polypeptide is Proteasome subunit beta (Acidimicrobium ferrooxidans (strain DSM 10331 / JCM 15462 / NBRC 103882 / ICP)).